The following is a 296-amino-acid chain: MSAHIINGTEIAAAIREEIRSEVIALKAKAGIVPGLATVLVGDDPASHSYVDSKIKMCQNLGIYSEHHPLPQNATIEDLLTLIAKLNADPKISGILVQVPLPAQISESLVLNAINPDKDVDGFHPVNVGRMCLGEPCFLPCTPHGVQELLIRSGIKIEGTHVVIVGRSNLVGKPLANILLQKAPGANATVTICHSGTKNLPEITRQADILVAAMGKPKFITSDMVREGAVVIDVGTTCIGYTPEGKRILSGDVDFEEVKEKAFAITPVPKGVGPMTIIMLMLNTLTAAKRAAGLIK.

Residues 166-168 (GRS), Ser195, and Thr236 contribute to the NADP(+) site.

It belongs to the tetrahydrofolate dehydrogenase/cyclohydrolase family. Homodimer.

It carries out the reaction (6R)-5,10-methylene-5,6,7,8-tetrahydrofolate + NADP(+) = (6R)-5,10-methenyltetrahydrofolate + NADPH. It catalyses the reaction (6R)-5,10-methenyltetrahydrofolate + H2O = (6R)-10-formyltetrahydrofolate + H(+). Its pathway is one-carbon metabolism; tetrahydrofolate interconversion. Functionally, catalyzes the oxidation of 5,10-methylenetetrahydrofolate to 5,10-methenyltetrahydrofolate and then the hydrolysis of 5,10-methenyltetrahydrofolate to 10-formyltetrahydrofolate. This chain is Bifunctional protein FolD, found in Dehalococcoides mccartyi (strain ATCC BAA-2100 / JCM 16839 / KCTC 5957 / BAV1).